A 626-amino-acid polypeptide reads, in one-letter code: Phosphomethylpyrimidine synthase (626 aa).

Residues 1–27 (MSKQEKAISLSESAQVDQQSVQPLPNS) are disordered. The segment covering 10–25 (LSESAQVDQQSVQPLP) has biased composition (polar residues). Residues asparagine 232, methionine 261, tyrosine 290, histidine 326, 346–348 (SRG), 387–390 (DGLR), and glutamate 426 each bind substrate. Histidine 430 is a binding site for Zn(2+). Residue tyrosine 453 participates in substrate binding. Histidine 494 contacts Zn(2+). Positions 574, 577, and 582 each coordinate [4Fe-4S] cluster.

Belongs to the ThiC family. As to quaternary structure, homodimer. The cofactor is [4Fe-4S] cluster.

It carries out the reaction 5-amino-1-(5-phospho-beta-D-ribosyl)imidazole + S-adenosyl-L-methionine = 4-amino-2-methyl-5-(phosphooxymethyl)pyrimidine + CO + 5'-deoxyadenosine + formate + L-methionine + 3 H(+). Its pathway is cofactor biosynthesis; thiamine diphosphate biosynthesis. Catalyzes the synthesis of the hydroxymethylpyrimidine phosphate (HMP-P) moiety of thiamine from aminoimidazole ribotide (AIR) in a radical S-adenosyl-L-methionine (SAM)-dependent reaction. The chain is Phosphomethylpyrimidine synthase from Pseudomonas entomophila (strain L48).